The primary structure comprises 324 residues: tRNA-dihydrouridine(20a/20b) synthase [NAD(P)+]-like (324 aa).

FMN contacts are provided by residues Pro33 to Val35 and Gln87. The active-site Proton donor is the Cys116. FMN is bound by residues Lys158, His186, Asn216–Asp218, and Ala240–Arg241.

This sequence belongs to the Dus family. Dus4 subfamily. It depends on FMN as a cofactor.

The enzyme catalyses 5,6-dihydrouridine(20a) in tRNA + NADP(+) = uridine(20a) in tRNA + NADPH + H(+). The catalysed reaction is 5,6-dihydrouridine(20a) in tRNA + NAD(+) = uridine(20a) in tRNA + NADH + H(+). It catalyses the reaction 5,6-dihydrouridine(20b) in tRNA + NAD(+) = uridine(20b) in tRNA + NADH + H(+). It carries out the reaction 5,6-dihydrouridine(20b) in tRNA + NADP(+) = uridine(20b) in tRNA + NADPH + H(+). Its function is as follows. Catalyzes the synthesis of dihydrouridine, a modified base found in the D-loop of most tRNAs. This is tRNA-dihydrouridine(20a/20b) synthase [NAD(P)+]-like (Dus4l) from Mus musculus (Mouse).